Consider the following 658-residue polypeptide: Alkyldihydroxyacetonephosphate synthase, peroxisomal (658 aa).

Disordered regions lie at residues 1–41 (MAEA…LRVL) and 63–86 (AASA…IPKK). Residues 1-58 (MAEAAAAAGGTGLGAGASYGSAADRDRDPDPDRAGRRLRVLSGHLLGRPREALSTNEC) constitute a peroxisome transit peptide. Residues 23 to 35 (ADRDRDPDPDRAG) are compositionally biased toward basic and acidic residues. The span at 63 to 77 (AASAATAAPTATPAA) shows a compositional bias: low complexity. Ser-65 carries the phosphoserine modification. Residue Thr-74 is modified to Phosphothreonine. Lys-102 is subject to N6-acetyllysine. In terms of domain architecture, FAD-binding PCMH-type spans 202-384 (FERIPDIVLW…TEATIKIRPV (183 aa)). FAD-binding positions include 234–240 (PIGGGTS), 303–309 (DSLEFST), and 316–319 (TRAS). Lys-347 bears the N6-acetyllysine mark. 368 to 374 (EGTLGVI) contributes to the FAD binding site. A substrate-binding site is contributed by Arg-515. Catalysis depends on Tyr-578, which acts as the Proton donor/acceptor. Important for enzyme activity stretches follow at residues 615 to 617 (HHH) and 654 to 658 (NRNLL).

The protein belongs to the FAD-binding oxidoreductase/transferase type 4 family. Homodimer. It depends on FAD as a cofactor.

It localises to the peroxisome membrane. Its subcellular location is the peroxisome. It catalyses the reaction a long chain fatty alcohol + a 1-acylglycerone 3-phosphate = a 1-O-alkylglycerone 3-phosphate + a long-chain fatty acid + H(+). The enzyme catalyses hexadecan-1-ol + 1-hexadecanoylglycerone 3-phosphate = 1-O-hexadecylglycerone 3-phosphate + hexadecanoate + H(+). The catalysed reaction is 1-hexadecanoylglycerone 3-phosphate + a long-chain fatty acid = a 1-acylglycerone 3-phosphate + hexadecanoate. It functions in the pathway glycerolipid metabolism; ether lipid biosynthesis. Functionally, catalyzes the exchange of the acyl chain in acyl-dihydroxyacetonephosphate (acyl-DHAP) for a long chain fatty alcohol, yielding the first ether linked intermediate, i.e. alkyl-dihydroxyacetonephosphate (alkyl-DHAP), in the pathway of ether lipid biosynthesis. In Homo sapiens (Human), this protein is Alkyldihydroxyacetonephosphate synthase, peroxisomal (AGPS).